Consider the following 157-residue polypeptide: Ribosomal RNA large subunit methyltransferase H (157 aa).

Residues leucine 73, glycine 105, and 124-129 (LSKMTF) contribute to the S-adenosyl-L-methionine site.

Belongs to the RNA methyltransferase RlmH family. Homodimer.

It localises to the cytoplasm. The catalysed reaction is pseudouridine(1915) in 23S rRNA + S-adenosyl-L-methionine = N(3)-methylpseudouridine(1915) in 23S rRNA + S-adenosyl-L-homocysteine + H(+). Functionally, specifically methylates the pseudouridine at position 1915 (m3Psi1915) in 23S rRNA. The chain is Ribosomal RNA large subunit methyltransferase H from Phocaeicola vulgatus (strain ATCC 8482 / DSM 1447 / JCM 5826 / CCUG 4940 / NBRC 14291 / NCTC 11154) (Bacteroides vulgatus).